Here is a 265-residue protein sequence, read N- to C-terminus: uncharacterized protein (265 aa).

The active site involves Glu-47.

This sequence belongs to the PhzF family.

This is an uncharacterized protein from Halalkalibacterium halodurans (strain ATCC BAA-125 / DSM 18197 / FERM 7344 / JCM 9153 / C-125) (Bacillus halodurans).